Reading from the N-terminus, the 256-residue chain is Hydroxyacylglutathione hydrolase (256 aa).

Zn(2+)-binding residues include H57, H59, D61, H62, H115, D134, and H172.

It belongs to the metallo-beta-lactamase superfamily. Glyoxalase II family. Monomer. It depends on Zn(2+) as a cofactor.

The enzyme catalyses an S-(2-hydroxyacyl)glutathione + H2O = a 2-hydroxy carboxylate + glutathione + H(+). Its pathway is secondary metabolite metabolism; methylglyoxal degradation; (R)-lactate from methylglyoxal: step 2/2. Its function is as follows. Thiolesterase that catalyzes the hydrolysis of S-D-lactoyl-glutathione to form glutathione and D-lactic acid. In Rhizobium johnstonii (strain DSM 114642 / LMG 32736 / 3841) (Rhizobium leguminosarum bv. viciae), this protein is Hydroxyacylglutathione hydrolase.